Here is a 195-residue protein sequence, read N- to C-terminus: MLSLHQLQFNIEQRNLFNLNITFLPSSITYIKGANGSGKSSLLRMISGIMQPNSGNIYYKNNNINNIPKPYCTYIGHNLGLKLEMTVLENLKFWSEIYNSSETLYAAIHYFKLQDLLDEKCYSLSSGMQKVVAAARLIACQSDLWLLDEVETNLSKENRDLLNNLIVMKANSGGIVLLSSHLESSIKSAQILQLV.

An ABC transporter domain is found at 1–195; sequence MLSLHQLQFN…IKSAQILQLV (195 aa). Residue 33–40 coordinates ATP; the sequence is GANGSGKS.

Belongs to the ABC transporter superfamily. CcmA exporter (TC 3.A.1.107) family. In terms of assembly, the complex is composed of two ATP-binding proteins (CcmA) and two transmembrane proteins (CcmB).

Its subcellular location is the cell inner membrane. It carries out the reaction heme b(in) + ATP + H2O = heme b(out) + ADP + phosphate + H(+). Part of the ABC transporter complex CcmAB involved in the biogenesis of c-type cytochromes; once thought to export heme, this seems not to be the case, but its exact role is uncertain. Responsible for energy coupling to the transport system. The protein is Cytochrome c biogenesis ATP-binding export protein CcmA of Rickettsia felis (strain ATCC VR-1525 / URRWXCal2) (Rickettsia azadi).